The primary structure comprises 83 residues: Apolipoprotein C-I (83 aa).

The signal sequence occupies residues Met-1–Ala-26.

Belongs to the apolipoprotein C1 family.

It localises to the secreted. Inhibitor of lipoprotein binding to the low density lipoprotein (LDL) receptor, LDL receptor-related protein, and very low density lipoprotein (VLDL) receptor. Associates with high density lipoproteins (HDL) and the triacylglycerol-rich lipoproteins in the plasma and makes up about 10% of the protein of the VLDL and 2% of that of HDL. Appears to interfere directly with fatty acid uptake and is also the major plasma inhibitor of cholesteryl ester transfer protein (CETP). Binds free fatty acids and reduces their intracellular esterification. Modulates the interaction of APOE with beta-migrating VLDL and inhibits binding of beta-VLDL to the LDL receptor-related protein. This chain is Apolipoprotein C-I (APOC1), found in Eonycteris spelaea (Lesser dawn bat).